A 596-amino-acid polypeptide reads, in one-letter code: Alpha-1,3-galactosidase A (596 aa).

The N-terminal stretch at 1-21 (MQNPVASLLFILAMLTGPCPA) is a signal peptide. The interval 23-57 (DYPERTERTQSAGNHVWHIDPDKGNDGNPGTAPST) is disordered. PbH1 repeat units follow at residues 351–373 (RGKI…NVHG), 482–504 (RKPV…LVED), 515–537 (VRNM…QIVP), and 547–569 (HRNI…RIRH).

It belongs to the glycosyl hydrolase 110 family. A subfamily.

It carries out the reaction Hydrolysis of terminal, non-reducing branched (1-&gt;3)-alpha-D-galactosidic residues, producing free D-galactose.. It catalyses the reaction Hydrolysis of terminal, non-reducing alpha-D-galactose residues in alpha-D-galactosides, including galactose oligosaccharides, galactomannans and galactolipids.. In terms of biological role, alpha-galactosidase that specifically removes branched alpha-1,3-linked galactose residues present in blood group B antigens. Has no activity toward linear alpha-1,3-linked galactose residues. The protein is Alpha-1,3-galactosidase A (glaA) of Akkermansia muciniphila (strain ATCC BAA-835 / DSM 22959 / JCM 33894 / BCRC 81048 / CCUG 64013 / CIP 107961 / Muc).